The following is a 116-amino-acid chain: Large ribosomal subunit protein bL17 (116 aa).

Belongs to the bacterial ribosomal protein bL17 family. In terms of assembly, part of the 50S ribosomal subunit. Contacts protein L32.

The chain is Large ribosomal subunit protein bL17 from Microcystis aeruginosa (strain NIES-843 / IAM M-2473).